We begin with the raw amino-acid sequence, 837 residues long: MPNSAGVEVARISVKVSPNTKEFRRELKTELEKIERELKGDVEINGHLDAAQAKADFKRMMMQLKTEAAKGVHVPVDVTVDKKSKKGGLLGGLLGGSRGLGDLGDDAEKASSQVQHLGKSFLGLTRAAWIGVGIVAVAAPLVGIVAGLLAGLPSLLSAFGAGAGVVALGMDGIKAAASTLAPTLETVKAAVSSTFQQGLTPVFQQLGPMLTAITPNLQNVASGLVNMAGSITDVITQAPGLQQIQNILTKTGEFFTGLGPVLATGTQAFLTLSNAGANSFGTLLAPLQEFTNGFNDMVNRVTSNGVFEGAMQGLSQTLGSVLNLFNRLMESGLQAMGQLGGPLSTFINGFGDLFVSLMPALTSVSGLIGNVLGTLGTQLAPIVTALTPAFQTLASTLGTMLTGALQALGPILTQVATLIGTTLNTALQALQPMLPSLMQSFQQISDVLVTSLAPHIPALATALGQVAGAVLQLAPTIISTLVPAFVQLVPKVAELVPTIVNLVQSFANLMPVVLPLAQALVSVAGAVIQVGVSIGGALIGALANLTEIISNVIKKVSEWVSSFSSGAQQIAAKAAELPGMIQSALANLMAIGLQAGKDLVQGLINGIGGMVSAAVNKAKELASSVAGAVKGFLGIESPSKLFTEYGQFTAEGFGNGMEAGFKPVIERAKDLAAELSRAMESGTDPSGILAGLDQNELKQMLAALEEERKRLKVEKNGIPKGDKAGREALQNQLDQIQAQKDILSYQRDRIKNESEYGDMAGEDPLVKAASGLMSAPVDFAKATGKQFLSDIGISGDGFISKAITEGIQYIFQIGSVDEALSIKDREESKNALSVVGR.

This is Minor tail protein Gp26 (26) from Mycobacterium phage L5 (Mycobacteriophage L5).